A 201-amino-acid polypeptide reads, in one-letter code: Putative lipoprotein Hmuk_2215 (201 aa).

The signal sequence occupies residues Met1 to Gly22. Cys23 carries the post-translational modification N-acetylcysteine. Residue Cys23 is the site of S-archaeol cysteine attachment. 2 disordered regions span residues Glu25 to Glu78 and Ala182 to Pro201. Residues Thr69–Glu78 are compositionally biased toward basic and acidic residues.

It is found in the cell membrane. This chain is Putative lipoprotein Hmuk_2215, found in Halomicrobium mukohataei (strain ATCC 700874 / DSM 12286 / JCM 9738 / NCIMB 13541) (Haloarcula mukohataei).